The chain runs to 371 residues: Cytochrome b (371 aa).

Transmembrane regions (helical) follow at residues 25–45, 69–90, 105–125, and 170–190; these read FGSMLLTCLGLQVLTGFFLAV, WMMQNLHAIGASMFFICIYIHI, WMSGITLLITLMATAFFGYVL, and FFALHFILPFAIISLSSLHII. 2 residues coordinate heme b: H75 and H89. Heme b-binding residues include H174 and H188. H193 contacts a ubiquinone. A run of 4 helical transmembrane segments spans residues 218–238, 280–300, 312–332, and 339–358; these read HKDLLLLTLMIMSLFIISSFF, LGGALALVMSIMILFIIPFTH, LSQLMFWTLVSTFITITWAAT, and FIVISQVTSSLYFTFFLSTP.

Belongs to the cytochrome b family. In terms of assembly, the cytochrome bc1 complex contains 3 respiratory subunits (MT-CYB, CYC1 and UQCRFS1), 2 core proteins (UQCRC1 and UQCRC2) and probably 6 low-molecular weight proteins. Requires heme b as cofactor.

It is found in the mitochondrion inner membrane. In terms of biological role, component of the ubiquinol-cytochrome c reductase complex (complex III or cytochrome b-c1 complex) that is part of the mitochondrial respiratory chain. The b-c1 complex mediates electron transfer from ubiquinol to cytochrome c. Contributes to the generation of a proton gradient across the mitochondrial membrane that is then used for ATP synthesis. This is Cytochrome b (MT-CYB) from Aspidites melanocephalus (Black-headed python).